Here is a 266-residue protein sequence, read N- to C-terminus: Small ribosomal subunit protein uS2 (266 aa).

Belongs to the universal ribosomal protein uS2 family.

The chain is Small ribosomal subunit protein uS2 from Paramagnetospirillum magneticum (strain ATCC 700264 / AMB-1) (Magnetospirillum magneticum).